The primary structure comprises 344 residues: Arginine N-succinyltransferase (344 aa).

Residue Leu125 coordinates succinyl-CoA. His229 (proton donor) is an active-site residue.

This sequence belongs to the arginine N-succinyltransferase family.

It carries out the reaction succinyl-CoA + L-arginine = N(2)-succinyl-L-arginine + CoA + H(+). Its pathway is amino-acid degradation; L-arginine degradation via AST pathway; L-glutamate and succinate from L-arginine: step 1/5. In terms of biological role, catalyzes the transfer of succinyl-CoA to arginine to produce N(2)-succinylarginine. The sequence is that of Arginine N-succinyltransferase from Escherichia coli O157:H7.